A 463-amino-acid polypeptide reads, in one-letter code: Golgi-associated PDZ and coiled-coil motif-containing protein (463 aa).

Serine 2 carries the post-translational modification N-acetylserine. A coiled-coil region spans residues 85–201; it reads AQTVSQINHK…RHIAVLQAEV (117 aa). The PDZ domain maps to 289–372; that stretch reads KVLLLKEDHE…EIEFEVVYVA (84 aa). A phosphoserine mark is found at serine 402 and serine 405.

Homooligomer. Interacts with FZD5. Interacts with FZD8. Interacts with GRID2 and BECN1. Interacts with CSPG5. Interacts with CLCN3. Interacts with STX6. Interacts with CFTR. Interacts with ASIC3. Interacts with GOLGA3. Interacts with NLGN1. Interacts with RHOQ. Interacts with MARCHF2; the interaction leads to CFTR ubiquitination and degradation. May interact with CACNG2. Interacts with CCDC62. Ubiquitously expressed (at protein level). Expressed in dorsal root glanglion (DRG), spinal cord and brain. Isoform 1 is preferentially expressed in whole brain (at protein level) and cerebellum. Expressed in spermatocytes and spermatides but not in Sertoli cells and spermatogonia.

The protein localises to the cytoplasm. It localises to the golgi apparatus membrane. Its subcellular location is the golgi apparatus. It is found in the trans-Golgi network membrane. The protein resides in the synapse. The protein localises to the postsynaptic density. It localises to the cell projection. Its subcellular location is the dendrite. Its function is as follows. Plays a role in intracellular protein trafficking and degradation. May regulate CFTR chloride currents and acid-induced ASIC3 currents by modulating cell surface expression of both channels. May also regulate the intracellular trafficking of the ADR1B receptor. May play a role in autophagy. Together with MARCHF2 mediates the ubiquitination and lysosomal degradation of CFTR. Overexpression results in CFTR intracellular retention and degradation in the lysosomes. The protein is Golgi-associated PDZ and coiled-coil motif-containing protein of Mus musculus (Mouse).